We begin with the raw amino-acid sequence, 180 residues long: uncharacterized protein (180 aa).

The 129-residue stretch at 35 to 163 (LRHRATYIVV…TPDSLKALAL (129 aa)) folds into the Nudix hydrolase domain. The Nudix box signature appears at 72–94 (GGVVQADEQLLESARREAEEELG). E88 and E92 together coordinate Mg(2+).

The protein belongs to the Nudix hydrolase family. It depends on Mg(2+) as a cofactor.

This is an uncharacterized protein from Shigella flexneri.